We begin with the raw amino-acid sequence, 124 residues long: Fluoride-specific ion channel FluC 2 (124 aa).

The next 4 helical transmembrane spans lie at 9–29, 34–54, 67–87, and 99–119; these read LGIFLAAMLGGLVRYLVSTWL, DFPWGTLFVNYLGIFCLIFLV, LILALGTGFCGGLTTFSSLML, and FSLVLYLLLSIGGGLLLAYFL. Na(+) is bound by residues Gly-77 and Thr-80.

This sequence belongs to the fluoride channel Fluc/FEX (TC 1.A.43) family.

It localises to the cell membrane. It carries out the reaction fluoride(in) = fluoride(out). With respect to regulation, na(+) is not transported, but it plays an essential structural role and its presence is essential for fluoride channel function. Fluoride-specific ion channel. Important for reducing fluoride concentration in the cell, thus reducing its toxicity. The chain is Fluoride-specific ion channel FluC 2 from Streptococcus pneumoniae (strain ATCC BAA-255 / R6).